The sequence spans 411 residues: Arginine deiminase (411 aa).

Residue C401 is the Amidino-cysteine intermediate of the active site.

This sequence belongs to the arginine deiminase family.

It is found in the cytoplasm. It carries out the reaction L-arginine + H2O = L-citrulline + NH4(+). It participates in amino-acid degradation; L-arginine degradation via ADI pathway; carbamoyl phosphate from L-arginine: step 1/2. The protein is Arginine deiminase of Staphylococcus haemolyticus (strain JCSC1435).